We begin with the raw amino-acid sequence, 1073 residues long: Serine/threonine-protein kinase 11-interacting protein (1073 aa).

6 LRR repeats span residues 166 to 187, 189 to 210, 212 to 233, 236 to 257, 258 to 279, and 283 to 304; these read ELQTVNFSYNSITALDDSLQLL, ALRVLDLSHNKVQDCEHYLTTL, ELEYLNLAYNFLSKVPNLGIFS, KLLTLILRNNELDSINGVEQLV, NLQHLDVAYNLLLEHAQLAPLS, and YLKKLHLEGNPLWFHQNHRSAT. Disordered stretches follow at residues 389–409, 455–533, 724–817, and 834–859; these read VKVRRASISEPSDTEHESQAL, SRSA…EKPE, EVSS…QGMK, and MGSYRYSASRGPTSSQLSMTSDSEET. The segment covering 515–532 has biased composition (acidic residues); it reads REEEADELMLGEEEDEKP. Composition is skewed to polar residues over residues 779 to 788 and 843 to 859; these read MDTSNSTRTP and RGPTSSQLSMTSDSEET.

This sequence belongs to the STK11IP family.

It localises to the cytoplasm. This chain is Serine/threonine-protein kinase 11-interacting protein (STK11IP), found in Gallus gallus (Chicken).